Here is a 77-residue protein sequence, read N- to C-terminus: Translation initiation factor IF-1, chloroplastic (77 aa).

Positions 1–71 (MKEQKLIHEG…TRGRIIYRLR (71 aa)) constitute an S1-like domain.

This sequence belongs to the IF-1 family. Component of the 30S ribosomal translation pre-initiation complex which assembles on the 30S ribosome in the order IF-2 and IF-3, IF-1 and N-formylmethionyl-tRNA(fMet); mRNA recruitment can occur at any time during PIC assembly.

Its subcellular location is the plastid. It localises to the chloroplast. Functionally, one of the essential components for the initiation of protein synthesis. Stabilizes the binding of IF-2 and IF-3 on the 30S subunit to which N-formylmethionyl-tRNA(fMet) subsequently binds. Helps modulate mRNA selection, yielding the 30S pre-initiation complex (PIC). Upon addition of the 50S ribosomal subunit IF-1, IF-2 and IF-3 are released leaving the mature 70S translation initiation complex. The sequence is that of Translation initiation factor IF-1, chloroplastic from Calycanthus floridus var. glaucus (Eastern sweetshrub).